The sequence spans 159 residues: ATP synthase subunit b 2 (159 aa).

A helical transmembrane segment spans residues 1 to 21 (MDATFWAFIALVIFVAIVVYM).

Belongs to the ATPase B chain family. In terms of assembly, F-type ATPases have 2 components, F(1) - the catalytic core - and F(0) - the membrane proton channel. F(1) has five subunits: alpha(3), beta(3), gamma(1), delta(1), epsilon(1). F(0) has three main subunits: a(1), b(2) and c(10-14). The alpha and beta chains form an alternating ring which encloses part of the gamma chain. F(1) is attached to F(0) by a central stalk formed by the gamma and epsilon chains, while a peripheral stalk is formed by the delta and b chains.

It is found in the cell inner membrane. Its function is as follows. F(1)F(0) ATP synthase produces ATP from ADP in the presence of a proton or sodium gradient. F-type ATPases consist of two structural domains, F(1) containing the extramembraneous catalytic core and F(0) containing the membrane proton channel, linked together by a central stalk and a peripheral stalk. During catalysis, ATP synthesis in the catalytic domain of F(1) is coupled via a rotary mechanism of the central stalk subunits to proton translocation. Functionally, component of the F(0) channel, it forms part of the peripheral stalk, linking F(1) to F(0). The sequence is that of ATP synthase subunit b 2 from Brucella ovis (strain ATCC 25840 / 63/290 / NCTC 10512).